The primary structure comprises 120 residues: Putative gamma-glutamylcyclotransferase MJ1514 (120 aa).

7 to 10 (YGSL) contributes to the substrate binding site. Residue Glu74 is the Proton acceptor of the active site.

It belongs to the gamma-glutamylcyclotransferase family.

In terms of biological role, putative gamma-glutamylcyclotransferase. This is Putative gamma-glutamylcyclotransferase MJ1514 from Methanocaldococcus jannaschii (strain ATCC 43067 / DSM 2661 / JAL-1 / JCM 10045 / NBRC 100440) (Methanococcus jannaschii).